The following is a 299-amino-acid chain: B-box zinc finger protein 22 (299 aa).

Zn(2+) is bound by residues Cys-5, Cys-8, Cys-28, His-33, Cys-57, Cys-60, Cys-80, and His-85. The B box-type 1; atypical zinc-finger motif lies at 5-47 (CNVCEAAEATVLCCADEAALCWACDEKIHAANKLAGKHQRVPL). The B box-type 2; atypical zinc finger occupies 57–99 (CDICQEASGFFFCLQDRALLCRKCDVAIHTVNPHVSAHQRFLL). Disordered stretches follow at residues 143–181 (FDHHHHQQQQEQQEGVIPGTKVNDQTSTKLPLVSSGSTT) and 206–299 (ENNG…RRRF). 3 stretches are compositionally biased toward polar residues: residues 164–181 (VNDQTSTKLPLVSSGSTT), 251–260 (QIQSPPTASG), and 277–290 (ITSSTPYTGSSPNQ).

As to quaternary structure, interacts with HY5. Post-translationally, ubiquitinated by COP1 in vitro. COP1-mediated degradation of BBX22 by the proteasome occurs in the dark and is important for a precise skotomorphogenesis process and optimization of seedling growth under short days conditions.

It is found in the nucleus. In terms of biological role, acts as a positive regulator of seedling photomorphogenesis and light-regulated inhibition of hypocotyl elongation, independently and in concert with HY5 and BBX21. Acts as a positive regulator of de-etiolation and influences chloroplast biogenesis and function through regulation of genes encoding chloroplast proteins. Acts downstream of COP1 and plays an important role in early and long-term adjustment of the shade avoidance syndrome (SAS) responses in natural environments. Regulates the expression of genes responsive to light hormone signals which may contribute to optimal seedling development. This is B-box zinc finger protein 22 from Arabidopsis thaliana (Mouse-ear cress).